Consider the following 360-residue polypeptide: Phosphate acyltransferase (360 aa).

It belongs to the PlsX family. In terms of assembly, homodimer. Probably interacts with PlsY.

It localises to the cytoplasm. The enzyme catalyses a fatty acyl-[ACP] + phosphate = an acyl phosphate + holo-[ACP]. It participates in lipid metabolism; phospholipid metabolism. Catalyzes the reversible formation of acyl-phosphate (acyl-PO(4)) from acyl-[acyl-carrier-protein] (acyl-ACP). This enzyme utilizes acyl-ACP as fatty acyl donor, but not acyl-CoA. The sequence is that of Phosphate acyltransferase from Caulobacter vibrioides (strain ATCC 19089 / CIP 103742 / CB 15) (Caulobacter crescentus).